A 220-amino-acid chain; its full sequence is Iron-sulfur cluster repair protein YtfE (220 aa).

It belongs to the RIC family. YtfE subfamily. In terms of assembly, homodimer.

The protein localises to the cytoplasm. In terms of biological role, di-iron-containing protein involved in the repair of iron-sulfur clusters damaged by oxidative and nitrosative stress conditions. The protein is Iron-sulfur cluster repair protein YtfE of Escherichia coli (strain SMS-3-5 / SECEC).